The sequence spans 352 residues: UDP-N-acetylglucosamine--N-acetylmuramyl-(pentapeptide) pyrophosphoryl-undecaprenol N-acetylglucosamine transferase (352 aa).

UDP-N-acetyl-alpha-D-glucosamine is bound by residues Ser195 and Gln287.

It belongs to the glycosyltransferase 28 family. MurG subfamily.

The protein localises to the cell membrane. It catalyses the reaction Mur2Ac(oyl-L-Ala-gamma-D-Glu-L-Lys-D-Ala-D-Ala)-di-trans,octa-cis-undecaprenyl diphosphate + UDP-N-acetyl-alpha-D-glucosamine = beta-D-GlcNAc-(1-&gt;4)-Mur2Ac(oyl-L-Ala-gamma-D-Glu-L-Lys-D-Ala-D-Ala)-di-trans,octa-cis-undecaprenyl diphosphate + UDP + H(+). The protein operates within cell wall biogenesis; peptidoglycan biosynthesis. Cell wall formation. Catalyzes the transfer of a GlcNAc subunit on undecaprenyl-pyrophosphoryl-MurNAc-pentapeptide (lipid intermediate I) to form undecaprenyl-pyrophosphoryl-MurNAc-(pentapeptide)GlcNAc (lipid intermediate II). The chain is UDP-N-acetylglucosamine--N-acetylmuramyl-(pentapeptide) pyrophosphoryl-undecaprenol N-acetylglucosamine transferase from Streptococcus pneumoniae (strain JJA).